We begin with the raw amino-acid sequence, 359 residues long: Archaemetzincin-2 (359 aa).

A Zn(2+)-binding site is contributed by His-254. Glu-255 functions as the Proton acceptor in the catalytic mechanism. 6 residues coordinate Zn(2+): His-258, His-264, Cys-265, Cys-270, Cys-289, and Cys-292.

The protein belongs to the peptidase M54 family. Requires Zn(2+) as cofactor. Predominantly expressed in testis.

Probable zinc metalloprotease. The polypeptide is Archaemetzincin-2 (Amz2) (Mus musculus (Mouse)).